The sequence spans 981 residues: RNA polymerase II assembly factor RTP1 (981 aa).

HEAT repeat units follow at residues 64-101, 161-199, 226-261, 366-403, 609-646, 655-692, 765-799, 800-836, and 945-980; these read SNNN…LLPI, DTLS…ILLG, YTLF…RRPE, KELN…TTPG, KDVL…GEET, SSYK…KLQS, ISLE…LCEL, EPET…NYIQ, and EYNY…VLDS. Residues 630 to 651 are compositionally biased toward acidic residues; the sequence is QEVEADSDDEVEEGEETEELDP. Residues 630–652 are disordered; sequence QEVEADSDDEVEEGEETEELDPN.

The protein belongs to the Tango6 family. In terms of assembly, interacts with RNA polymerase II subunits RPB2 and RPB3. Interacts with the R2TP complex. Interacts with the nuclear pore complex subunits NUP100 and NUP116.

It localises to the cytoplasm. Functionally, required for the cytoplasmic assembly and the nuclear import of RNA polymerase II. May facilitate the starting interaction between RNA polymerase II subunits RPB2 and RPB3 and the subsequent interaction of the resulting complex with subunit RPB1. May also participate in the transport of RNA polymerase II through the nuclear pore complex. In Saccharomyces cerevisiae (strain ATCC 204508 / S288c) (Baker's yeast), this protein is RNA polymerase II assembly factor RTP1.